Reading from the N-terminus, the 340-residue chain is Glycerol-3-phosphate dehydrogenase [NAD(P)+] (340 aa).

Residues Ser14, Phe15, Arg35, and Lys109 each contribute to the NADPH site. Sn-glycerol 3-phosphate contacts are provided by Lys109 and Gly137. Ala141 lines the NADPH pocket. 5 residues coordinate sn-glycerol 3-phosphate: Lys192, Asp245, Ser255, Arg256, and Asn257. Residue Lys192 is the Proton acceptor of the active site. Arg256 serves as a coordination point for NADPH. NADPH-binding residues include Val280 and Glu282.

Belongs to the NAD-dependent glycerol-3-phosphate dehydrogenase family.

It localises to the cytoplasm. It catalyses the reaction sn-glycerol 3-phosphate + NAD(+) = dihydroxyacetone phosphate + NADH + H(+). It carries out the reaction sn-glycerol 3-phosphate + NADP(+) = dihydroxyacetone phosphate + NADPH + H(+). Its pathway is membrane lipid metabolism; glycerophospholipid metabolism. Its function is as follows. Catalyzes the reduction of the glycolytic intermediate dihydroxyacetone phosphate (DHAP) to sn-glycerol 3-phosphate (G3P), the key precursor for phospholipid synthesis. This Teredinibacter turnerae (strain ATCC 39867 / T7901) protein is Glycerol-3-phosphate dehydrogenase [NAD(P)+].